Here is a 645-residue protein sequence, read N- to C-terminus: MGRIHKLDDQLANKIAAGEVVERPASVVKELVENAIDAHSTAVEIELEEAGMTKIRVIDNGDGMEEEDCLLAFERHATSKIQDEHDLFRIRTLGFRGEALPSIASVSEVELVTSTGSGPGTKLVLKGGALVARERAAGRKGTDITVSNLFFNTPARLKYMKTIHTELGHAADVVNRLALAHPDVSFRLRHHGKTLLATNGSGDVRHVLAAIYGMETAKQMIPIEAESLDFTVRGYISLPEVTRASRNYMSLIVNGRYVRNIPLMKAIEAGYHTLLPIGRYPIVFLAIEMDPVLVDVNVHPAKLEVRFSKEAELNELITATIRQAFRQRTLIPSVSADSKTVKAKAEQASWTFAHRVHEPPAQPDGKAEGTSDVTAAASLASEGSLSPLPAAAQADAPAVSEEAEASVFSERRTGVVNDLPAAELKRDAEVEEEPTEACLPADEQAEEKRAVDRLPPLYPIGQLHGTYILAENEHGLYMIDQHAAQERINYEYFREKLGEVTNEVQELLVPLTFEYPADEYERIAACRDELARCGVFLEPFGPRAFLVRSHPVWFPKGKEKEIIEEMIEHVLTAKTVDIKQLREQAAIVMSCKRAIKANQHLRTDEIFALLETLRQTTDPFTCPHGRPIIVHFSTYEIEKLFKRVM.

It belongs to the DNA mismatch repair MutL/HexB family.

This protein is involved in the repair of mismatches in DNA. It is required for dam-dependent methyl-directed DNA mismatch repair. May act as a 'molecular matchmaker', a protein that promotes the formation of a stable complex between two or more DNA-binding proteins in an ATP-dependent manner without itself being part of a final effector complex. The protein is DNA mismatch repair protein MutL of Geobacillus thermodenitrificans (strain NG80-2).